Reading from the N-terminus, the 364-residue chain is Mannose-1-phosphate guanylyltransferase catalytic subunit beta (364 aa).

A substrate-binding domain region spans residues K2–P220. D109 is a binding site for GDP-alpha-D-mannose. D109 lines the Mg(2+) pocket. K160 is a catalytic residue. Residue D216 participates in GDP-alpha-D-mannose binding. D216 contacts Mg(2+). The segment at A243 to M364 is hexapeptide repeat domain.

The protein belongs to the transferase hexapeptide repeat family. As to quaternary structure, component of the GMPPA-GMPPB mannose-1-phosphate guanylyltransferase complex composed of 4 GMPPA subunits and 8 tag-335/GMPPB subunits; the complex is organized into three layers, a central layer made up of 2 GMPPA dimers sandwiched between two layers each made up of 2 tag-335/GMPPB dimers. Catalytic activity of tag-335/GMPPB is reduced when part of the complex and binding of GDP-alpha-D-Mannose by GMPPA induces allosteric feedback inhibition of tag-335/GMPPB. Mg(2+) is required as a cofactor.

The catalysed reaction is alpha-D-mannose 1-phosphate + GTP + H(+) = GDP-alpha-D-mannose + diphosphate. The protein operates within nucleotide-sugar biosynthesis; GDP-alpha-D-mannose biosynthesis; GDP-alpha-D-mannose from alpha-D-mannose 1-phosphate (GTP route): step 1/1. With respect to regulation, enzyme activity is reduced by incorporation into the GMPPA-GMPPB mannose-1-phosphate guanylyltransferase complex. Allosterically inhibited, when part of the GMPPA-GMPPB complex, by GDP-alpha-D-mannose binding to GMPPA. Catalytic subunit of the GMPPA-GMPPB mannose-1-phosphate guanylyltransferase complex. Catalyzes the formation of GDP-mannose, an essential precursor of glycan moieties of glycoproteins and glycolipids. Can catalyze the reverse reaction in vitro. Together with GMPPA regulates GDP-alpha-D-mannose levels. This chain is Mannose-1-phosphate guanylyltransferase catalytic subunit beta, found in Caenorhabditis briggsae.